A 323-amino-acid chain; its full sequence is Alpha-tubulin N-acetyltransferase 1 (323 aa).

Positions 1-190 constitute an N-acetyltransferase domain; sequence MEFPFDVDAL…NNFVIFEGFF (190 aa). At Lys-56 the chain carries N6-acetyllysine; by autocatalysis. 124-137 contacts acetyl-CoA; the sequence is FYIHESVQRHGHGR. Position 146 is an N6-acetyllysine; by autocatalysis (Lys-146). 160 to 169 lines the acetyl-CoA pocket; sequence SQKLLKFLNK. Residues 196 to 239 form a disordered region; sequence PPAPSLRATRHSRAAAVDPTPTAPARKLPPKRAEGDIKPYSSSD. Low complexity predominate over residues 209–220; that stretch reads AAAVDPTPTAPA. Positions 226–239 are enriched in basic and acidic residues; it reads KRAEGDIKPYSSSD. Residues Lys-233 and Lys-244 each carry the N6-acetyllysine; by autocatalysis modification. The disordered stretch occupies residues 252 to 287; sequence PLNRAPRRATPPAHPPPRSSSLGNSPERGPLRPFVP. Phosphoserine occurs at positions 272 and 276. Arg-305 carries the post-translational modification Asymmetric dimethylarginine. A Phosphoserine modification is found at Ser-315. At Arg-323 the chain carries Omega-N-methylarginine.

This sequence belongs to the acetyltransferase ATAT1 family. Component of the BBSome complex. Interacts with AP2 alpha-adaptins, including AP2A2, but not with AP1 gamma-adaptin (AP1G1/AP1G2); this interaction is required for efficient alpha-tubulin acetylation, hence clathrin-coated pits are sites of microtubule acetylation. In terms of processing, autoacetylation strongly increases tubulin acetylation.

The protein resides in the cytoplasm. The protein localises to the membrane. It is found in the clathrin-coated pit. Its subcellular location is the cell junction. It localises to the focal adhesion. The protein resides in the cell projection. The protein localises to the axon. It is found in the cytoskeleton. Its subcellular location is the spindle. It carries out the reaction L-lysyl-[alpha-tubulin] + acetyl-CoA = N(6)-acetyl-L-lysyl-[alpha-tubulin] + CoA + H(+). Functionally, specifically acetylates 'Lys-40' in alpha-tubulin on the lumenal side of microtubules. Promotes microtubule destabilization and accelerates microtubule dynamics; this activity may be independent of acetylation activity. Acetylates alpha-tubulin with a slow enzymatic rate, due to a catalytic site that is not optimized for acetyl transfer. Enters the microtubule through each end and diffuses quickly throughout the lumen of microtubules. Acetylates only long/old microtubules because of its slow acetylation rate since it does not have time to act on dynamically unstable microtubules before the enzyme is released. Required for normal sperm flagellar function. Promotes directional cell locomotion and chemotaxis, through AP2A2-dependent acetylation of alpha-tubulin at clathrin-coated pits that are concentrated at the leading edge of migrating cells. May facilitate primary cilium assembly. This chain is Alpha-tubulin N-acetyltransferase 1, found in Macaca mulatta (Rhesus macaque).